The sequence spans 339 residues: RNA 3'-terminal phosphate cyclase (339 aa).

ATP contacts are provided by residues glutamine 103 and 283–287 (HLADQ). The Tele-AMP-histidine intermediate role is filled by histidine 308.

This sequence belongs to the RNA 3'-terminal cyclase family. Type 1 subfamily.

It localises to the cytoplasm. The enzyme catalyses a 3'-end 3'-phospho-ribonucleotide-RNA + ATP = a 3'-end 2',3'-cyclophospho-ribonucleotide-RNA + AMP + diphosphate. In terms of biological role, catalyzes the conversion of 3'-phosphate to a 2',3'-cyclic phosphodiester at the end of RNA. The mechanism of action of the enzyme occurs in 3 steps: (A) adenylation of the enzyme by ATP; (B) transfer of adenylate to an RNA-N3'P to produce RNA-N3'PP5'A; (C) and attack of the adjacent 2'-hydroxyl on the 3'-phosphorus in the diester linkage to produce the cyclic end product. The biological role of this enzyme is unknown but it is likely to function in some aspects of cellular RNA processing. The chain is RNA 3'-terminal phosphate cyclase from Salmonella typhimurium (strain LT2 / SGSC1412 / ATCC 700720).